The chain runs to 437 residues: Na(+)/H(+) antiporter NhaA (437 aa).

11 consecutive transmembrane segments (helical) span residues serine 12 to alanine 32, leucine 65 to leucine 85, alanine 103 to valine 123, glycine 133 to glycine 153, isoleucine 162 to phenylalanine 182, histidine 186 to glycine 206, isoleucine 214 to serine 234, glycine 308 to serine 328, valine 333 to isoleucine 353, isoleucine 377 to leucine 397, and leucine 412 to valine 432.

Belongs to the NhaA Na(+)/H(+) (TC 2.A.33) antiporter family.

The protein resides in the cell inner membrane. It catalyses the reaction Na(+)(in) + 2 H(+)(out) = Na(+)(out) + 2 H(+)(in). Na(+)/H(+) antiporter that extrudes sodium in exchange for external protons. This chain is Na(+)/H(+) antiporter NhaA, found in Bacteroides fragilis (strain YCH46).